The chain runs to 377 residues: Nitric oxide reductase FlRd-NAD(+) reductase (377 aa).

This sequence belongs to the FAD-dependent oxidoreductase family. FAD is required as a cofactor.

Its subcellular location is the cytoplasm. It catalyses the reaction 2 reduced [nitric oxide reductase rubredoxin domain] + NAD(+) + H(+) = 2 oxidized [nitric oxide reductase rubredoxin domain] + NADH. It functions in the pathway nitrogen metabolism; nitric oxide reduction. One of at least two accessory proteins for anaerobic nitric oxide (NO) reductase. Reduces the rubredoxin moiety of NO reductase. The sequence is that of Nitric oxide reductase FlRd-NAD(+) reductase from Salmonella paratyphi C (strain RKS4594).